The following is a 331-amino-acid chain: MASHCSMRVILLRFSNGVSSRSILNSTNHRLLSLTMTNTLSSLSSISPHTTTSHFTAASQQSDDQNCFRKLQLRKISISTPLCMGRRSSKIAGRKGAQDSKKAKLYCRIGKEVVSAVKKGGPNPVSNTTLATILDKAKELDVPKDIVERNIKRASEKGQEAFIEKIYEVYGYGGVSMVVEVLTDKINRSVAAIRSVVKDYGGKMADSGSVMFKFKRVRVVNIKVTEADKDQLLIIALDAGAEDVIEPPTYEDDTDEDREERYYKIVTSNENYSTILSKLRDEGVNFEPDNGSELLPLTTVEVDDEAMELNKELMQKLLELDDVDAVYIDQK.

Belongs to the TACO1 family.

The chain is Probable transcriptional regulatory protein At2g25830 from Arabidopsis thaliana (Mouse-ear cress).